The chain runs to 311 residues: Ribosomal RNA small subunit methyltransferase H (311 aa).

S-adenosyl-L-methionine contacts are provided by residues 33-35 (AGH), Asp-53, Phe-80, Asp-101, and Gln-108.

The protein belongs to the methyltransferase superfamily. RsmH family.

The protein localises to the cytoplasm. The enzyme catalyses cytidine(1402) in 16S rRNA + S-adenosyl-L-methionine = N(4)-methylcytidine(1402) in 16S rRNA + S-adenosyl-L-homocysteine + H(+). In terms of biological role, specifically methylates the N4 position of cytidine in position 1402 (C1402) of 16S rRNA. This is Ribosomal RNA small subunit methyltransferase H from Clostridioides difficile (strain 630) (Peptoclostridium difficile).